Here is a 306-residue protein sequence, read N- to C-terminus: Pyridoxal 5'-phosphate synthase subunit PdxS (306 aa).

Asp36 is a D-ribose 5-phosphate binding site. Catalysis depends on Lys93, which acts as the Schiff-base intermediate with D-ribose 5-phosphate. D-ribose 5-phosphate is bound at residue Gly165. Residue Arg177 participates in D-glyceraldehyde 3-phosphate binding. D-ribose 5-phosphate is bound by residues Gly226 and 247–248 (GS).

This sequence belongs to the PdxS/SNZ family. In the presence of PdxT, forms a dodecamer of heterodimers.

It carries out the reaction aldehydo-D-ribose 5-phosphate + D-glyceraldehyde 3-phosphate + L-glutamine = pyridoxal 5'-phosphate + L-glutamate + phosphate + 3 H2O + H(+). It participates in cofactor biosynthesis; pyridoxal 5'-phosphate biosynthesis. Catalyzes the formation of pyridoxal 5'-phosphate from ribose 5-phosphate (RBP), glyceraldehyde 3-phosphate (G3P) and ammonia. The ammonia is provided by the PdxT subunit. Can also use ribulose 5-phosphate and dihydroxyacetone phosphate as substrates, resulting from enzyme-catalyzed isomerization of RBP and G3P, respectively. The sequence is that of Pyridoxal 5'-phosphate synthase subunit PdxS from Corynebacterium urealyticum (strain ATCC 43042 / DSM 7109).